A 505-amino-acid polypeptide reads, in one-letter code: tRNA-2-methylthio-N(6)-dimethylallyladenosine synthase (505 aa).

Residues 1-39 are disordered; it reads MGQKAKAQAPTTHPRPHTLSSQVAPALPRRPRHAAPESL. The MTTase N-terminal domain occupies 47 to 162; sequence MKAHLITYGC…IGAALESNER (116 aa). Positions 56, 92, 125, 194, 198, and 201 each coordinate [4Fe-4S] cluster. One can recognise a Radical SAM core domain in the interval 180–413; that stretch reads PSGKLQAHLT…IARQKDWSAR (234 aa). The TRAM domain occupies 416–479; the sequence is AQKVGTVQQV…PHMMYGHILG (64 aa).

This sequence belongs to the methylthiotransferase family. MiaB subfamily. Monomer. [4Fe-4S] cluster is required as a cofactor.

The protein localises to the cytoplasm. The enzyme catalyses N(6)-dimethylallyladenosine(37) in tRNA + (sulfur carrier)-SH + AH2 + 2 S-adenosyl-L-methionine = 2-methylsulfanyl-N(6)-dimethylallyladenosine(37) in tRNA + (sulfur carrier)-H + 5'-deoxyadenosine + L-methionine + A + S-adenosyl-L-homocysteine + 2 H(+). Catalyzes the methylthiolation of N6-(dimethylallyl)adenosine (i(6)A), leading to the formation of 2-methylthio-N6-(dimethylallyl)adenosine (ms(2)i(6)A) at position 37 in tRNAs that read codons beginning with uridine. This is tRNA-2-methylthio-N(6)-dimethylallyladenosine synthase from Deinococcus radiodurans (strain ATCC 13939 / DSM 20539 / JCM 16871 / CCUG 27074 / LMG 4051 / NBRC 15346 / NCIMB 9279 / VKM B-1422 / R1).